The primary structure comprises 148 residues: MKLDLKILDARMRDYLPAYATTGSAGLDLRACLDAPVTLQPGETTLVPTGLAIHLADPGYAALILPRSGLGHKHGIVLGNLVGLIDSDYQGQLMVSTWNRGQTAFVLNPFERLAQLVIVPVVQAQFNIVDEFTESDRGEGGFGSTGRH.

Residues 67–69, Asn-80, 84–86, and Met-94 contribute to the substrate site; these read RSG and LID.

Belongs to the dUTPase family. Mg(2+) serves as cofactor.

It carries out the reaction dUTP + H2O = dUMP + diphosphate + H(+). It functions in the pathway pyrimidine metabolism; dUMP biosynthesis; dUMP from dCTP (dUTP route): step 2/2. Its function is as follows. This enzyme is involved in nucleotide metabolism: it produces dUMP, the immediate precursor of thymidine nucleotides and it decreases the intracellular concentration of dUTP so that uracil cannot be incorporated into DNA. The protein is Deoxyuridine 5'-triphosphate nucleotidohydrolase of Burkholderia cenocepacia (strain HI2424).